Reading from the N-terminus, the 622-residue chain is DNA mismatch repair protein MutL (622 aa).

It belongs to the DNA mismatch repair MutL/HexB family.

In terms of biological role, this protein is involved in the repair of mismatches in DNA. It is required for dam-dependent methyl-directed DNA mismatch repair. May act as a 'molecular matchmaker', a protein that promotes the formation of a stable complex between two or more DNA-binding proteins in an ATP-dependent manner without itself being part of a final effector complex. This Clostridium acetobutylicum (strain ATCC 824 / DSM 792 / JCM 1419 / IAM 19013 / LMG 5710 / NBRC 13948 / NRRL B-527 / VKM B-1787 / 2291 / W) protein is DNA mismatch repair protein MutL.